The sequence spans 185 residues: Ribosome-recycling factor (185 aa).

Belongs to the RRF family.

It is found in the cytoplasm. Its function is as follows. Responsible for the release of ribosomes from messenger RNA at the termination of protein biosynthesis. May increase the efficiency of translation by recycling ribosomes from one round of translation to another. The chain is Ribosome-recycling factor from Teredinibacter turnerae (strain ATCC 39867 / T7901).